The chain runs to 304 residues: Acetylglutamate kinase (304 aa).

Substrate-binding positions include 77 to 78 (GG), arginine 99, and asparagine 193.

Belongs to the acetylglutamate kinase family. ArgB subfamily.

It is found in the cytoplasm. It carries out the reaction N-acetyl-L-glutamate + ATP = N-acetyl-L-glutamyl 5-phosphate + ADP. It functions in the pathway amino-acid biosynthesis; L-arginine biosynthesis; N(2)-acetyl-L-ornithine from L-glutamate: step 2/4. Functionally, catalyzes the ATP-dependent phosphorylation of N-acetyl-L-glutamate. The sequence is that of Acetylglutamate kinase from Chlorobium limicola (strain DSM 245 / NBRC 103803 / 6330).